A 352-amino-acid polypeptide reads, in one-letter code: MNFIHDPLTPRVLFGAGRLQSLGEELKLLGIRRVLVISTPEQRELANQVAALIPGSVAGFFDRATMHVPSQIVDQAASVARELGVDSYVAPGGGSTIGLAKMLALHSSLPIVAIPTTYAGSEMTSIYGVTENELKKTGRDRRVLARTVIYDPELTFGLPTGISVTSGLNAIAHAVEGLYAPEVNPILAIMAQQGIAALAKSIPTIRSAPTDLEARSQAQYGAWLCGSVLGNVSMALHHKLCHTLGGTFNLPHAETHTVVLPHALAYNTPAIPRANAWLQEALATREPAQALFDLAKSNGAPVSLQSIGMKEADLDRACELVMSAQYPNPRPLEKHAIANLLRRAYLGEPPQP.

This sequence belongs to the iron-containing alcohol dehydrogenase family.

It catalyses the reaction 3-oxoadipate + NAD(+) = maleylacetate + NADH + H(+). The enzyme catalyses 3-oxoadipate + NADP(+) = maleylacetate + NADPH + H(+). The protein operates within aromatic compound metabolism; 3-chlorocatechol degradation. The chain is Maleylacetate reductase (tcbF) from Pseudomonas sp. (strain P51).